The primary structure comprises 419 residues: DNA polymerase IV (419 aa).

In terms of domain architecture, UmuC spans 12-193; that stretch reads IFHIDMNCFY…MSVEEMYGIG (182 aa). The Mg(2+) site is built by Asp16 and Asp112. Glu113 is an active-site residue. The segment at 388–419 is disordered; it reads IITSQKNKNESQENQQPRTSFQKDFLDDYKKP.

This sequence belongs to the DNA polymerase type-Y family. In terms of assembly, monomer. The cofactor is Mg(2+).

The protein localises to the cytoplasm. The catalysed reaction is DNA(n) + a 2'-deoxyribonucleoside 5'-triphosphate = DNA(n+1) + diphosphate. Poorly processive, error-prone DNA polymerase involved in untargeted mutagenesis. Copies undamaged DNA at stalled replication forks, which arise in vivo from mismatched or misaligned primer ends. These misaligned primers can be extended by PolIV. Exhibits no 3'-5' exonuclease (proofreading) activity. May be involved in translesional synthesis, in conjunction with the beta clamp from PolIII. The protein is DNA polymerase IV of Oceanobacillus iheyensis (strain DSM 14371 / CIP 107618 / JCM 11309 / KCTC 3954 / HTE831).